Here is a 460-residue protein sequence, read N- to C-terminus: Serine--tRNA ligase (460 aa).

Position 255–257 (255–257 (TAE)) interacts with L-serine. Residues 286–288 (RKE) and Val-302 each bind ATP. Position 309 (Glu-309) interacts with L-serine. Residue 373–376 (EMVS) participates in ATP binding. Position 409 (Thr-409) interacts with L-serine.

It belongs to the class-II aminoacyl-tRNA synthetase family. Type-1 seryl-tRNA synthetase subfamily. In terms of assembly, homodimer. The tRNA molecule binds across the dimer.

It is found in the cytoplasm. The catalysed reaction is tRNA(Ser) + L-serine + ATP = L-seryl-tRNA(Ser) + AMP + diphosphate + H(+). The enzyme catalyses tRNA(Sec) + L-serine + ATP = L-seryl-tRNA(Sec) + AMP + diphosphate + H(+). Its pathway is aminoacyl-tRNA biosynthesis; selenocysteinyl-tRNA(Sec) biosynthesis; L-seryl-tRNA(Sec) from L-serine and tRNA(Sec): step 1/1. Its function is as follows. Catalyzes the attachment of serine to tRNA(Ser). Is also able to aminoacylate tRNA(Sec) with serine, to form the misacylated tRNA L-seryl-tRNA(Sec), which will be further converted into selenocysteinyl-tRNA(Sec). This chain is Serine--tRNA ligase, found in Hyperthermus butylicus (strain DSM 5456 / JCM 9403 / PLM1-5).